We begin with the raw amino-acid sequence, 890 residues long: DNA mismatch repair protein MutS (890 aa).

607-614 serves as a coordination point for ATP; that stretch reads GPNMSGKS.

It belongs to the DNA mismatch repair MutS family.

Functionally, this protein is involved in the repair of mismatches in DNA. It is possible that it carries out the mismatch recognition step. This protein has a weak ATPase activity. The chain is DNA mismatch repair protein MutS from Bacillus mycoides (strain KBAB4) (Bacillus weihenstephanensis).